The sequence spans 674 residues: Penicillin-binding protein activator LpoA (674 aa).

A signal peptide spans 1-31 (MLSSTFVRTKAGRSKPVRLTAVIAAALFLAG). The N-palmitoyl cysteine moiety is linked to residue Cys-32. A lipid anchor (S-diacylglycerol cysteine) is attached at Cys-32. Positions 291 to 349 (GVTPSTPVQQQQPASVPEQAAQPASTDPNANGAVSTSAPDAAPVTAAQPSAPSTAPITP) are disordered. Positions 292 to 315 (VTPSTPVQQQQPASVPEQAAQPAS) are enriched in low complexity. Positions 316–328 (TDPNANGAVSTSA) are enriched in polar residues. Residues 331 to 349 (AAPVTAAQPSAPSTAPITP) are compositionally biased toward low complexity.

Belongs to the LpoA family. In terms of assembly, interacts with PBP1a.

Its subcellular location is the cell outer membrane. Regulator of peptidoglycan synthesis that is essential for the function of penicillin-binding protein 1A (PBP1a). In Serratia proteamaculans (strain 568), this protein is Penicillin-binding protein activator LpoA.